Reading from the N-terminus, the 951-residue chain is Serine/threonine-protein kinase 10 (951 aa).

The Protein kinase domain maps to 36–294; the sequence is WEIIGELGDG…AAQLLEHPFV (259 aa). ATP is bound by residues 42-50 and Lys-65; that span reads LGDGAFGKV. Residue Asp-157 is the Proton acceptor of the active site. Residues 319 to 330 show a composition bias toward acidic residues; that stretch reads EENGEVEEEEAS. A disordered region spans residues 319–479; sequence EENGEVEEEE…DSGSNSASES (161 aa). Positions 331-343 are enriched in polar residues; it reads DTPSSNKSVSQSA. Residues 345-356 are compositionally biased toward basic and acidic residues; it reads GEKDKHTGKEHV. Residues 364–373 show a composition bias toward polar residues; it reads PQNTDSQADI. Basic and acidic residues-rich tracts occupy residues 374–394 and 410–427; these read HSQKRNHEGKNYPEHNRHDAV and HEPKRNSAAESYRNEEHG. A compositionally biased stretch (polar residues) spans 429 to 443; sequence AVSSNQRPKSSQSDR. Ser-483, Ser-487, and Ser-491 each carry phosphoserine; by PLK1. The stretch at 583 to 723 forms a coiled coil; the sequence is EQEMNSKRKF…NKKQQLLRDR (141 aa). Over residues 785–800 the composition is skewed to basic and acidic residues; the sequence is QERARLPKNQKAEAKT. The segment at 785–804 is disordered; sequence QERARLPKNQKAEAKTRMTM. A coiled-coil region spans residues 898-928; that stretch reads RENLRPRKKALEDELEHKKEEQEMFFRMNEE. Residues 930–951 form a disordered region; sequence AGHPFPSNKPAKFYSFSSPEAS.

This sequence belongs to the protein kinase superfamily. STE Ser/Thr protein kinase family. STE20 subfamily. As to quaternary structure, homodimer. Autophosphorylates. Phosphorylated by plk1/plx1, suggesting the existence of a feedback loop with plk1/plx1. activation of the protein.

It localises to the cell membrane. The catalysed reaction is L-seryl-[protein] + ATP = O-phospho-L-seryl-[protein] + ADP + H(+). The enzyme catalyses L-threonyl-[protein] + ATP = O-phospho-L-threonyl-[protein] + ADP + H(+). In terms of biological role, may act as a polo kinase kinase by mediating phosphorylation of plk1/plx1 and subsequent activation of plk1/plx1 during oocyte maturation. The sequence is that of Serine/threonine-protein kinase 10 (stk10) from Xenopus tropicalis (Western clawed frog).